A 193-amino-acid chain; its full sequence is Activity-regulated cytoskeleton associated protein 2 (193 aa).

It belongs to the ARC/ARG3.1 family. As to quaternary structure, homooligomer; homooligomerizes into virion-like capsids.

It localises to the extracellular vesicle membrane. Functionally, self-assembles into virion-like capsids that encapsulate RNAs and mediate intercellular RNA transfer. Arc2 protein is released from cells in extracellular vesicles that mediate the transfer of mRNA into neighboring cells. In Drosophila melanogaster (Fruit fly), this protein is Activity-regulated cytoskeleton associated protein 2.